Consider the following 809-residue polypeptide: Histone H2A deubiquitinase MYSM1 (809 aa).

The region spanning 33–78 (GYEPNWMFDHGQEIYGRSWTSISQFVQTRTPLQVKNYARHFFKTKV) is the SANT domain. Disordered regions lie at residues 113-140 (PAQPAVVTSDDTSTGENVMEETEAVTED) and 320-378 (DATD…KETY). Basic and acidic residues-rich tracts occupy residues 335 to 345 (TLDHPEDRSKP) and 363 to 378 (TDGRTFSDSDSGKETY). The region spanning 410-508 (FKKPTEEVVL…FGCEEANRGE (99 aa)) is the SWIRM domain. One can recognise an MPN domain in the interval 592 to 719 (VKIHATALVT…YSSTRISPLS (128 aa)). The Zn(2+) site is built by H671, H673, and D684. A JAMM motif motif is present at residues 671–684 (HSHPTFAPNPSVRD).

It belongs to the peptidase M67A family. MYSM1 subfamily.

Its subcellular location is the nucleus. Its function is as follows. Metalloprotease that specifically deubiquitinates monoubiquitinated histone H2A, a specific tag for epigenetic transcriptional repression, thereby acting as a coactivator. Preferentially deubiquitinates monoubiquitinated H2A in hyperacetylated nucleosomes. Deubiquitination of histone H2A leads to facilitate the phosphorylation and dissociation of histone H1 from the nucleosome. Acts as a coactivator by participating in the initiation and elongation steps of androgen receptor (AR)-induced gene activation. In Branchiostoma floridae (Florida lancelet), this protein is Histone H2A deubiquitinase MYSM1 (MYSM1).